The sequence spans 58 residues: MRCLPVFVILLLLIASVPSVDAELKAKDDMPQASFHDNAERDQQKKTSDCCFYHNCCC.

The signal sequence occupies residues 1-22; it reads MRCLPVFVILLLLIASVPSVDA. Residues 23 to 46 constitute a propeptide that is removed on maturation; that stretch reads ELKAKDDMPQASFHDNAERDQQKK.

Homodimer; disulfide-linked. In terms of processing, 5 disulfide bonds are present in each homodimer: two intrachain disulfide bonds per subunit, and one interchain disulfide bond linking the two subunits. In terms of tissue distribution, expressed by the venom duct.

It is found in the secreted. In Conus textile (Cloth-of-gold cone), this protein is Conotoxin TxXIIIA.